A 190-amino-acid chain; its full sequence is Translation initiation factor IF-3 (190 aa).

Belongs to the IF-3 family. As to quaternary structure, monomer.

The protein resides in the cytoplasm. Its function is as follows. IF-3 binds to the 30S ribosomal subunit and shifts the equilibrium between 70S ribosomes and their 50S and 30S subunits in favor of the free subunits, thus enhancing the availability of 30S subunits on which protein synthesis initiation begins. This chain is Translation initiation factor IF-3, found in Prochlorococcus marinus (strain MIT 9301).